Consider the following 108-residue polypeptide: UPF0060 membrane protein YnfA (108 aa).

Residues 1 to 5 (MLKTT) lie on the Periplasmic side of the membrane. The helical transmembrane segment at 6 to 26 (LLFFVTALCEIIGCFLPWLWL) threads the bilayer. Residues 27-30 (KRGA) are Cytoplasmic-facing. A helical membrane pass occupies residues 31 to 51 (SMWWLLPAAASLALFVWLLTL). Residues 52–60 (HPAASGRVY) are Periplasmic-facing. The helical transmembrane segment at 61–81 (AAYGGVYVCTALLWLRVVDGV) threads the bilayer. The Cytoplasmic portion of the chain corresponds to 82–84 (RLT). The chain crosses the membrane as a helical span at residues 85 to 105 (VYDWCGALIALCGMLIIVVGW). The Periplasmic portion of the chain corresponds to 106-108 (GRT).

The protein belongs to the UPF0060 family.

The protein resides in the cell inner membrane. The sequence is that of UPF0060 membrane protein YnfA from Salmonella schwarzengrund (strain CVM19633).